The sequence spans 607 residues: Autophagy-related protein 22-2 (607 aa).

The interval 9-31 (FQSPSPDEGVQQRPPRYVGEDTT) is disordered. Residues 44 to 64 (YGIAAEVFAVCGVGSFLPLTL) form a helical membrane-spanning segment. N-linked (GlcNAc...) asparagine glycans are attached at residues asparagine 88 and asparagine 91. 3 helical membrane passes run 111–131 (SFAMYTFSLAVLIQALTLISF), 143–160 (TLLMVFGFAGALASMLFV), and 161–178 (FIAPPLFVIGSILVVVGV). Residues 203–263 (QEGKADDGTE…GMGTKAPLSS (61 aa)) form a disordered region. N-linked (GlcNAc...) asparagine glycosylation is present at asparagine 235. Helical transmembrane passes span 277-297 (GIGLGYCAAVFVQIISIIMLL), 310-330 (TLPMRFVLLLVGIWWGAFTLV), 381-401 (VLIFLVAWFLLSDAMATVSGT), 415-435 (PLIGLLSITATLSGMTGAFLW), 450-470 (IILCIALFEMIPLYGLLAYIP), 484-504 (WEIFPLAIVHGVVSGGLASYC), 521-543 (YALYAATDKGSSFIGPAIVGGIV), and 552-572 (GFFFMAILIVLPIPLVWMVNA). Positions 585 to 607 (TLGKSHGGPAEDAQEAEGLLARE) are disordered.

Belongs to the ATG22 family.

It is found in the vacuole membrane. Its function is as follows. Vacuolar effluxer which mediate the efflux of amino acids resulting from autophagic degradation. The release of autophagic amino acids allows the maintenance of protein synthesis and viability during nitrogen starvation. The polypeptide is Autophagy-related protein 22-2 (atg22-2) (Penicillium rubens (strain ATCC 28089 / DSM 1075 / NRRL 1951 / Wisconsin 54-1255) (Penicillium chrysogenum)).